Consider the following 378-residue polypeptide: Putative monoglyceride lipase (378 aa).

The short motif at 97-101 is the GXSXG element; sequence GHSMG. Ser-99 serves as the catalytic Nucleophile. Residues Asp-219 and His-249 each act as charge relay system in the active site. Over residues 276 to 292 the composition is skewed to basic and acidic residues; it reads PSETVKSEQETAVEHPK. A disordered region spans residues 276 to 350; it reads PSETVKSEQE…TSESTTVPET (75 aa). The segment covering 293–305 has biased composition (low complexity); the sequence is PTATTSAPSASPT. Ser-301 carries the phosphoserine modification. A compositionally biased stretch (polar residues) spans 341-350; the sequence is TSESTTVPET.

This sequence belongs to the AB hydrolase superfamily. Monoacylglycerol lipase family.

The protein resides in the lipid droplet. The protein localises to the cytoplasm. It is found in the endoplasmic reticulum. It localises to the mitochondrion outer membrane. It carries out the reaction Hydrolyzes glycerol monoesters of long-chain fatty acids.. It participates in glycerolipid metabolism; triacylglycerol degradation. Functionally, converts monoacylglycerides (MAG) to free fatty acids and glycerol. Has a strong preference for monounsaturated monoglycerides. Required for efficient degradation of MAG, short-lived intermediates of glycerolipid metabolism which may also function as lipid signaling molecules. Controls inactivation of the signaling lipid N-palmitoylethanolamine (PEA). Involved in fatty acid ethyl ester (FAEE) catabolism. FAEEs are non-oxidative metabolites of ethanol that are transiently incorporated into lipid droplets (LDs). Their mobilization by LD-resident FAEE hydrolases facilitates a controlled metabolism of these potentially toxic lipid metabolites. The polypeptide is Putative monoglyceride lipase (mgl1) (Schizosaccharomyces pombe (strain 972 / ATCC 24843) (Fission yeast)).